A 308-amino-acid chain; its full sequence is Nodulation protein D 1 (308 aa).

The 58-residue stretch at 6 to 63 (LDLNLLVALDALMTERNLTAAARSINLSQPAMSAAVGRLRVYFEDELFTMNGRELVLT) folds into the HTH lysR-type domain. The H-T-H motif DNA-binding region spans 23–42 (LTAAARSINLSQPAMSAAVG).

It belongs to the LysR transcriptional regulatory family.

NodD regulates the expression of the nodABCFE genes which encode other nodulation proteins. NodD is also a negative regulator of its own expression. Binds flavonoids as inducers. This is Nodulation protein D 1 (nodD1) from Rhizobium tropici.